A 62-amino-acid polypeptide reads, in one-letter code: Venom protein 51.1 (62 aa).

Positions 1 to 25 are cleaved as a signal peptide; sequence MKFFGILLIVTMVVLVMIATTYVES. Disulfide bonds link cysteine 32–cysteine 53, cysteine 39–cysteine 58, and cysteine 43–cysteine 60.

In terms of tissue distribution, expressed by the venom gland.

It localises to the secreted. Its function is as follows. Neurotoxin. Decreases the action potential of myelinated nerves in mice and frogs. This Lychas mucronatus (Chinese swimming scorpion) protein is Venom protein 51.1.